The primary structure comprises 96 residues: Putative septation protein SpoVG (96 aa).

It belongs to the SpoVG family.

In terms of biological role, could be involved in septation. The polypeptide is Putative septation protein SpoVG (Borrelia hermsii (strain HS1 / DAH)).